A 156-amino-acid chain; its full sequence is 6,7-dimethyl-8-ribityllumazine synthase (156 aa).

5-amino-6-(D-ribitylamino)uracil is bound by residues F22, 57 to 59 (AYE), and 81 to 83 (SVI). 86 to 87 (GT) contributes to the (2S)-2-hydroxy-3-oxobutyl phosphate binding site. H89 acts as the Proton donor in catalysis. F114 contributes to the 5-amino-6-(D-ribitylamino)uracil binding site. R128 contributes to the (2S)-2-hydroxy-3-oxobutyl phosphate binding site.

This sequence belongs to the DMRL synthase family. As to quaternary structure, forms an icosahedral capsid composed of 60 subunits, arranged as a dodecamer of pentamers.

It carries out the reaction (2S)-2-hydroxy-3-oxobutyl phosphate + 5-amino-6-(D-ribitylamino)uracil = 6,7-dimethyl-8-(1-D-ribityl)lumazine + phosphate + 2 H2O + H(+). It functions in the pathway cofactor biosynthesis; riboflavin biosynthesis; riboflavin from 2-hydroxy-3-oxobutyl phosphate and 5-amino-6-(D-ribitylamino)uracil: step 1/2. In terms of biological role, catalyzes the formation of 6,7-dimethyl-8-ribityllumazine by condensation of 5-amino-6-(D-ribitylamino)uracil with 3,4-dihydroxy-2-butanone 4-phosphate. This is the penultimate step in the biosynthesis of riboflavin. The chain is 6,7-dimethyl-8-ribityllumazine synthase from Photobacterium profundum (strain SS9).